The chain runs to 56 residues: Ovomucoid (56 aa).

The Kazal-like domain occupies 6–56; the sequence is VDCSEYPKPDCTTEERPLCGSDNKTYGNKCNFCNAVVESNGTLTLSHFGKC. Cystine bridges form between C8–C38, C16–C35, and C24–C56. N45 carries N-linked (GlcNAc...) asparagine glycosylation.

The protein localises to the secreted. The sequence is that of Ovomucoid from Francolinus pondicerianus (Grey francolin).